Reading from the N-terminus, the 229-residue chain is Coiled-coil domain-containing protein 134 (229 aa).

The first 22 residues, 1 to 22, serve as a signal peptide directing secretion; the sequence is MDLLQFLAFLFVLLLSGMGATG. Asn148 is a short sequence motif (prevents secretion from ER). N-linked (GlcNAc...) asparagine glycosylation occurs at Asn148. A disordered region spans residues 193–229; sequence TDPFQKALREEEKRRKKEEKRKEIRKGPRISRSQSEL. Positions 196–218 form a coiled coil; it reads FQKALREEEKRRKKEEKRKEIRK. The Nuclear localization signal motif lies at 206 to 213; sequence RRKKEEKR.

It belongs to the CCDC134 family. As to quaternary structure, interacts with TADA2A. Associates with the PCAF complex via TADA2A binding. In terms of processing, O-glycosylated, with additional sialic acid modifications. As to expression, expressed in cervical gland, cervical squamous epithelium, endometrium, stomach, kidney distal convoluted tubule, spermatogenic cells in testis, mammary gland, liver and striated muscle (at protein level). Also detected in placenta. Highest expression in testis relative to other tissues. Detected in T cells and dendritic cells; highly expressed in activated CD8(+) T cells, and also expressed at lower levels in CD4(+) T cells.

The protein localises to the endoplasmic reticulum lumen. It is found in the secreted. The protein resides in the cytoplasm. It localises to the nucleus. Functionally, molecular adapter required to prevent protein hyperglycosylation of HSP90B1: during translation, associates with nascent HSP90B1 and the STT3A catalytic component of the OST-A complex and tethers them to a specialized translocon that forms a microenvironment for HSP90B1 folding. In the CCDC134-containing translocon, STT3A associates with the SRT pseudosubstrate motif of HSP90B1, preventing access to facultative glycosylation sites until folding is completed, preventing hyperglycosylation and subsequent degradation of HSP90B1. In extracellular secreted form, promotes proliferation and activation of CD8(+) T-cells, suggesting a cytokine-like function. May inhibit ERK and JNK signaling activity. May suppress cell migration and invasion activity, via its effects on ERK and JNK signaling. May also localize in the nucleus: enhances stability of the PCAF histone acetyltransferase (HAT) complex member TADA2A and thus promotes PCAF-mediated histone acetyltransferase activity. Has a critical role in the regulation of osteogenesis and bone development. This Homo sapiens (Human) protein is Coiled-coil domain-containing protein 134.